A 215-amino-acid chain; its full sequence is uncharacterized protein (215 aa).

Belongs to the thiaminase-2 family.

This is an uncharacterized protein from Haemophilus influenzae (strain ATCC 51907 / DSM 11121 / KW20 / Rd).